The following is a 361-amino-acid chain: Biotin synthase (361 aa).

The region spanning 47 to 278 (VHGDEVALCG…AAHIFVMGGR (232 aa)) is the Radical SAM core domain. Cysteine 65, cysteine 69, and cysteine 72 together coordinate [4Fe-4S] cluster. Serine 110, cysteine 143, and cysteine 203 together coordinate [2Fe-2S] cluster.

It belongs to the radical SAM superfamily. Biotin synthase family. In terms of assembly, homodimer. Requires [4Fe-4S] cluster as cofactor. [2Fe-2S] cluster is required as a cofactor.

The enzyme catalyses (4R,5S)-dethiobiotin + (sulfur carrier)-SH + 2 reduced [2Fe-2S]-[ferredoxin] + 2 S-adenosyl-L-methionine = (sulfur carrier)-H + biotin + 2 5'-deoxyadenosine + 2 L-methionine + 2 oxidized [2Fe-2S]-[ferredoxin]. Its pathway is cofactor biosynthesis; biotin biosynthesis; biotin from 7,8-diaminononanoate: step 2/2. Its function is as follows. Catalyzes the conversion of dethiobiotin (DTB) to biotin by the insertion of a sulfur atom into dethiobiotin via a radical-based mechanism. This chain is Biotin synthase, found in Anaeromyxobacter dehalogenans (strain 2CP-C).